A 184-amino-acid chain; its full sequence is Endoribonuclease YbeY (184 aa).

Acidic residues-rich tracts occupy residues 1–11 and 19–29; these read MTVEVGADENP and DGAGDESDDED. The segment at 1–38 is disordered; sequence MTVEVGADENPDFAHDETDGAGDESDDEDAQGRDPELD. Residues H146, H150, and H156 each contribute to the Zn(2+) site.

The protein belongs to the endoribonuclease YbeY family. It depends on Zn(2+) as a cofactor.

Its subcellular location is the cytoplasm. Functionally, single strand-specific metallo-endoribonuclease involved in late-stage 70S ribosome quality control and in maturation of the 3' terminus of the 16S rRNA. The protein is Endoribonuclease YbeY of Burkholderia pseudomallei (strain K96243).